Reading from the N-terminus, the 418-residue chain is UDP-N-acetylglucosamine 1-carboxyvinyltransferase (418 aa).

22–23 (KN) serves as a coordination point for phosphoenolpyruvate. Arginine 91 is a binding site for UDP-N-acetyl-alpha-D-glucosamine. The Proton donor role is filled by cysteine 115. At cysteine 115 the chain carries 2-(S-cysteinyl)pyruvic acid O-phosphothioketal. UDP-N-acetyl-alpha-D-glucosamine is bound by residues 120–124 (RPVDL), aspartate 305, and isoleucine 327.

It belongs to the EPSP synthase family. MurA subfamily.

The protein resides in the cytoplasm. The enzyme catalyses phosphoenolpyruvate + UDP-N-acetyl-alpha-D-glucosamine = UDP-N-acetyl-3-O-(1-carboxyvinyl)-alpha-D-glucosamine + phosphate. The protein operates within cell wall biogenesis; peptidoglycan biosynthesis. Its function is as follows. Cell wall formation. Adds enolpyruvyl to UDP-N-acetylglucosamine. In Wigglesworthia glossinidia brevipalpis, this protein is UDP-N-acetylglucosamine 1-carboxyvinyltransferase.